Here is a 418-residue protein sequence, read N- to C-terminus: Thermolabile hemolysin (418 aa).

The N-terminal stretch at 1-19 (MMKKTITLLTALLPLASAV) is a signal peptide. Serine 153 functions as the Nucleophile in the catalytic mechanism. Active-site residues include aspartate 390 and histidine 393.

It belongs to the 'GDSL' lipolytic enzyme family. There are two forms of LDH. The LDH(S) may be a protein in which 13 residues of the N-terminal of LDH(L) are deleted.

Its subcellular location is the secreted. Functionally, phospholipase hydrolyzing both fatty acid esters of phospholipid, i.e. it hydrolyzes phosphatidylcholine (PC) to lysophosphatidylcholine (LPC) and then LPC to glycerophosphorylcholine (GPC). The chain is Thermolabile hemolysin from Vibrio parahaemolyticus serotype O3:K6 (strain RIMD 2210633).